Consider the following 159-residue polypeptide: 2-C-methyl-D-erythritol 2,4-cyclodiphosphate synthase (159 aa).

2 residues coordinate a divalent metal cation: D10 and H12. Residues 10-12 and 36-37 contribute to the 4-CDP-2-C-methyl-D-erythritol 2-phosphate site; these read DVH and HS. Residue H44 coordinates a divalent metal cation. 4-CDP-2-C-methyl-D-erythritol 2-phosphate is bound by residues 58–60, 63–67, and R144; these read DIG and FSDTD.

This sequence belongs to the IspF family. In terms of assembly, homotrimer. Requires a divalent metal cation as cofactor.

It carries out the reaction 4-CDP-2-C-methyl-D-erythritol 2-phosphate = 2-C-methyl-D-erythritol 2,4-cyclic diphosphate + CMP. It participates in isoprenoid biosynthesis; isopentenyl diphosphate biosynthesis via DXP pathway; isopentenyl diphosphate from 1-deoxy-D-xylulose 5-phosphate: step 4/6. Functionally, involved in the biosynthesis of isopentenyl diphosphate (IPP) and dimethylallyl diphosphate (DMAPP), two major building blocks of isoprenoid compounds. Catalyzes the conversion of 4-diphosphocytidyl-2-C-methyl-D-erythritol 2-phosphate (CDP-ME2P) to 2-C-methyl-D-erythritol 2,4-cyclodiphosphate (ME-CPP) with a corresponding release of cytidine 5-monophosphate (CMP). In Paraburkholderia phytofirmans (strain DSM 17436 / LMG 22146 / PsJN) (Burkholderia phytofirmans), this protein is 2-C-methyl-D-erythritol 2,4-cyclodiphosphate synthase.